The following is a 469-amino-acid chain: Glutamate--tRNA ligase (469 aa).

A 'HIGH' region motif is present at residues 11–21; the sequence is PSPTGFIHLGN. A 'KMSKS' region motif is present at residues 243-247; sequence KMSKR. Residue lysine 246 participates in ATP binding.

This sequence belongs to the class-I aminoacyl-tRNA synthetase family. Glutamate--tRNA ligase type 1 subfamily. Monomer.

It localises to the cytoplasm. The enzyme catalyses tRNA(Glu) + L-glutamate + ATP = L-glutamyl-tRNA(Glu) + AMP + diphosphate. Functionally, catalyzes the attachment of glutamate to tRNA(Glu) in a two-step reaction: glutamate is first activated by ATP to form Glu-AMP and then transferred to the acceptor end of tRNA(Glu). The sequence is that of Glutamate--tRNA ligase from Burkholderia cenocepacia (strain HI2424).